Consider the following 763-residue polypeptide: MLSLKKYLTEGLLQFTILLSLIGVRVDVDTYLTSQLPPLREIILGPSSAYTQTQFHNLRNTLDGYGIHPKSIDLDNYFTARRLLNQVRALDRFQVPTTEVNAWLVHRDPEGSVSGSQPSSGLALESSSGLQDVTGPDNGVRESETEQGFSEDLEDLGAVAPPVSGDLTKEDIDLGAGREIFDYSHRQKEQDVDKELRDGAEQEDTWPGEGAEALARNLLVDGETGESFPAQVPGGEDQTALSLEECLRLLEATCPFGENAEFPADISSITEAVPSESEPPGLQNNLLSPLLTGTESPFDLEQQWQDLMSIMEMQAMEVNTSTSEVLYNAPPGDPLSTNYSLAPNTPINQNVSLHQASLGGCSQDFSLFSPEVESLPVASSSTLLPLVPSNSTSLNSTFGSTNLAGLFFPPQLNGTANDTAGPELPDPLGGLLDEAMLDEISLMDLAIEEGFNPVQASQLEEEFDSDSGLSLDSSHSPSSLSSSEGSSSSSSSSSSSSSSSASSSASSSFSEEGAVGYSSDSETLDLEEAEGAVGYQPEYSKFCRMSYQDPSQLSCLPYLEHVGHNHTYNMAPSALDSADLPPPSTLKKGSKEKQADFLDKQMSRDEHRARAMKIPFTNDKIINLPVEEFNELLSKYQLSEAQLSLIRDIRRRGKNKMAAQNCRKRKLDTILNLERDVEDLQRDKARLLREKVEFLRSLRQMKQKVQSLYQEVFGRLRDENGRPYSPSQYALQYAGDGSVLLIPRTLADQQARRQERKPKDRRK.

Residues 7–24 traverse the membrane as a helical; Signal-anchor for type II membrane protein segment; that stretch reads YLTEGLLQFTILLSLIGV. The interval 108-150 is disordered; sequence DPEGSVSGSQPSSGLALESSSGLQDVTGPDNGVRESETEQGFS. Positions 116–131 are enriched in low complexity; the sequence is SQPSSGLALESSSGLQ. A cholesterol recognition/amino acid consensus (CRAC) region region spans residues 180–188; it reads IFDYSHRQK. N-linked (GlcNAc...) asparagine glycans are attached at residues Asn338 and Asn350. Residues 369–373 form a CPD region; that stretch reads SPEVE. The N-linked (GlcNAc...) asparagine glycan is linked to Asn413. 2 disordered regions span residues 460–523 and 585–604; these read EEEF…DSET and TLKK…QMSR. Positions 466 to 470 match the Destruction motif motif; the sequence is DSGLS. Over residues 466–514 the composition is skewed to low complexity; that stretch reads DSGLSLDSSHSPSSLSSSEGSSSSSSSSSSSSSSSASSSASSSFSEEGA. The residue at position 519 (Ser519) is a Phosphoserine; by CK2. The span at 589 to 604 shows a compositional bias: basic and acidic residues; sequence GSKEKQADFLDKQMSR. Residue Ser590 is modified to Phosphoserine; by PKA. One can recognise a bZIP domain in the interval 645–708; the sequence is LIRDIRRRGK…RQMKQKVQSL (64 aa). A basic motif region spans residues 647 to 666; that stretch reads RDIRRRGKNKMAAQNCRKRK. The interval 673-687 is leucine-zipper; sequence LERDVEDLQRDKARL. Positions 752–759 match the Nuclear localization signal motif; sequence RRQERKPK.

Belongs to the bZIP family. CNC subfamily. As to quaternary structure, interacts with KEAP1. In terms of assembly, interacts (via CPD region) with FBXW7; leading to its ubiquitination and degradation. Interacts with SYVN1/HRD1; leading to its ubiquitination and degradation. Interacts (when ubiquitinated) with DDI2; leading to its cleavage. Interacts (via the bZIP domain) with small MAF protein (MAFF, MAFG or MAFK); required for binding to antioxidant response elements (AREs) on DNA. Interacts (via Destruction motif) with BTRC; leading to its ubiquitination and degradation. Interacts with CEBPB; the heterodimer represses expression of DSPP during odontoblast differentiation. Interacts with MOTS-c, a peptide produced by the mitochondrially encoded 12S rRNA MT-RNR1. Post-translationally, cleaved at Leu-104 by the aspartyl protease DDI2 following retrotranslocation, releasing the protein from the endoplasmic reticulum membrane and forming the transcription factor NRF1 that translocates into the nucleus. Ubiquitination is prerequisite for cleavage by aspartyl protease DDI2. In terms of processing, N-glycosylated in normal conditions, when it has a single-pass type II membrane protein topology, with the DNA-binding domain facing the endoplasmic reticulum lumen. Deglycosylated during retrotranslocation to the cytosolic side of the membrane, to have a single-pass type III membrane protein topology with the major part of the protein facing the cytosol. Ubiquitinated by the SCF(FBXW7) complex and SYVN1/HRD1, leading to its degradation by the proteasome. Ubiquitinated during retrotranslocation to the cytosolic side of the membrane: ubiquitination does not lead to degradation and is required for processing by the aspartyl protease DDI2 and subsequent release from the endoplasmic reticulum membrane. Post-translationally, phosphorylation by CK2 at Ser-519 inhibits transcription factor activity, possibly by affecting DNA-binding activity. Phosphorylation at Ser-590 is required for interaction with CEBPB. In terms of processing, ubiquitinated by the SCF(BTRC) complex in the nucleus, leading to its degradation by the proteasome.

It localises to the endoplasmic reticulum membrane. The protein resides in the nucleus. Endoplasmic reticulum membrane sensor that translocates into the nucleus in response to various stresses to act as a transcription factor. Constitutes a precursor of the transcription factor NRF1. Able to detect various cellular stresses, such as cholesterol excess, oxidative stress or proteasome inhibition. In response to stress, it is released from the endoplasmic reticulum membrane following cleavage by the protease DDI2 and translocates into the nucleus to form the transcription factor NRF1. Acts as a key sensor of cholesterol excess: in excess cholesterol conditions, the endoplasmic reticulum membrane form of the protein directly binds cholesterol via its CRAC motif, preventing cleavage and release of the transcription factor NRF1, thereby allowing expression of genes promoting cholesterol removal, such as CD36. Involved in proteasome homeostasis: in response to proteasome inhibition, it is released from the endoplasmic reticulum membrane, translocates to the nucleus and activates expression of genes encoding proteasome subunits. Its function is as follows. CNC-type bZIP family transcription factor that translocates to the nucleus and regulates expression of target genes in response to various stresses. Heterodimerizes with small-Maf proteins (MAFF, MAFG or MAFK) and binds DNA motifs including the antioxidant response elements (AREs), which regulate expression of genes involved in oxidative stress response. Activates or represses expression of target genes, depending on the context. Plays a key role in cholesterol homeostasis by acting as a sensor of cholesterol excess: in low cholesterol conditions, translocates into the nucleus and represses expression of genes involved in defense against cholesterol excess, such as CD36. In excess cholesterol conditions, the endoplasmic reticulum membrane form of the protein directly binds cholesterol via its CRAC motif, preventing cleavage and release of the transcription factor NRF1, thereby allowing expression of genes promoting cholesterol removal. Critical for redox balance in response to oxidative stress: acts by binding the AREs motifs on promoters and mediating activation of oxidative stress response genes, such as GCLC, GCLM, GSS, MT1 and MT2. Plays an essential role during fetal liver hematopoiesis: probably has a protective function against oxidative stress and is involved in lipid homeostasis in the liver. Involved in proteasome homeostasis: in response to proteasome inhibition, mediates the 'bounce-back' of proteasome subunits by translocating into the nucleus and activating expression of genes encoding proteasome subunits. Also involved in regulating glucose flux. Together with CEBPB; represses expression of DSPP during odontoblast differentiation. In response to ascorbic acid induction, activates expression of SP7/Osterix in osteoblasts. The chain is Endoplasmic reticulum membrane sensor NFE2L1 from Bos taurus (Bovine).